We begin with the raw amino-acid sequence, 86 residues long: Mu-theraphotoxin-Cg2a 2 (86 aa).

The first 21 residues, 1 to 21 (MKVSVVITLAVLGVMFVWASA), serve as a signal peptide directing secretion. Positions 22–50 (AELEERGSDQRDSPAWIKSMERIFQSEER) are excised as a propeptide. Cystine bridges form between C52/C66, C59/C71, and C65/C78. F84 carries the post-translational modification Phenylalanine amide.

It belongs to the neurotoxin 10 (Hwtx-1) family. 37 (Jztx-31) subfamily. As to expression, expressed by the venom gland.

The protein localises to the secreted. Its function is as follows. Inhibits both peak current and fast inactivation of voltage-gated sodium channels (Nav) channels. Inhibits the inactivation of Nav on DRG neurons (EC(50)=1.77 uM) and peak current of cardiac myocytes (IC(50)=0.90 uM). The chain is Mu-theraphotoxin-Cg2a 2 from Chilobrachys guangxiensis (Chinese earth tiger tarantula).